The primary structure comprises 114 residues: Protein U68 (114 aa).

This sequence belongs to the herpesviridae UL96 family.

This chain is Protein U68 (U68), found in Human herpesvirus 6A (strain Uganda-1102) (HHV-6 variant A).